We begin with the raw amino-acid sequence, 102 residues long: MSEEGKITRSIHVIPLKRVYWGRRTNRADRAVRLIRKYVRRHFKEAEKIIIDPAVNEYVWSRSREKPPRRVIVEIRFDKEEKTAKVLLIRSSKAKIMSANSK.

The protein belongs to the eukaryotic ribosomal protein eL31 family.

This Staphylothermus marinus (strain ATCC 43588 / DSM 3639 / JCM 9404 / F1) protein is Large ribosomal subunit protein eL31.